Reading from the N-terminus, the 250-residue chain is Global transcriptional regulator CodY (250 aa).

The tract at residues 1 to 147 (MSTLLEKTRK…GATVVGLEIL (147 aa)) is GAF domain. The segment at residues 195-214 (ASKIADKVGITRSVIVNALR) is a DNA-binding region (H-T-H motif).

The protein belongs to the CodY family.

Its subcellular location is the cytoplasm. DNA-binding global transcriptional regulator which is involved in the adaptive response to starvation and acts by directly or indirectly controlling the expression of numerous genes in response to nutrient availability. During rapid exponential growth, CodY is highly active and represses genes whose products allow adaptation to nutrient depletion. This is Global transcriptional regulator CodY from Thermoanaerobacter sp. (strain X514).